A 386-amino-acid polypeptide reads, in one-letter code: MKLSDFDFDLPSELIAQYPSSKRDHSDLLIAATPPIKTKFYNIIDYLKEGDLLVFNNSKVIKAKLNLEKNRPLSKLAYRDKFEGDMECRTAVYTNVREDSSTGSTYKLPLEVELEKRSNITINLNQRLSNNCWSAFAKPARRLNIGDEFHFDNHKVIIVEKLAIGEIKVKFELDDISVFEFLDKYGEMPLPLYIRHHEAQKSNNERYQNIYSSIEGSVAAPTAGLHFTNDILNKLKAKNIQTTFLTLHVGAGTFLPVKTENIHEHKMHTEYCSITPDTARLINKAKQEKQRIIAVGTTTLRTLESSCNNGTVKACDFETDIFITPGFKFQTADILLTNFHFPKSTLFMLICAFAGFKEMHKLYKYAIKEKMRFFSYGDATLLYRKI.

It belongs to the QueA family. Monomer.

The protein localises to the cytoplasm. The catalysed reaction is 7-aminomethyl-7-carbaguanosine(34) in tRNA + S-adenosyl-L-methionine = epoxyqueuosine(34) in tRNA + adenine + L-methionine + 2 H(+). It participates in tRNA modification; tRNA-queuosine biosynthesis. In terms of biological role, transfers and isomerizes the ribose moiety from AdoMet to the 7-aminomethyl group of 7-deazaguanine (preQ1-tRNA) to give epoxyqueuosine (oQ-tRNA). This is S-adenosylmethionine:tRNA ribosyltransferase-isomerase from Rickettsia canadensis (strain McKiel).